Reading from the N-terminus, the 1404-residue chain is DNA-directed RNA polymerase subunit beta' (1404 aa).

Zn(2+) is bound by residues cysteine 70, cysteine 72, cysteine 85, and cysteine 88. Aspartate 460, aspartate 462, and aspartate 464 together coordinate Mg(2+). Residues cysteine 814, cysteine 888, cysteine 895, and cysteine 898 each coordinate Zn(2+).

This sequence belongs to the RNA polymerase beta' chain family. In terms of assembly, the RNAP catalytic core consists of 2 alpha, 1 beta, 1 beta' and 1 omega subunit. When a sigma factor is associated with the core the holoenzyme is formed, which can initiate transcription. The cofactor is Mg(2+). It depends on Zn(2+) as a cofactor.

It catalyses the reaction RNA(n) + a ribonucleoside 5'-triphosphate = RNA(n+1) + diphosphate. Functionally, DNA-dependent RNA polymerase catalyzes the transcription of DNA into RNA using the four ribonucleoside triphosphates as substrates. The sequence is that of DNA-directed RNA polymerase subunit beta' from Shewanella amazonensis (strain ATCC BAA-1098 / SB2B).